Consider the following 404-residue polypeptide: RNA exonuclease 3 (404 aa).

Over residues 1-17 (MNNNAQNKRSLDDSNGN) the composition is skewed to polar residues. The disordered stretch occupies residues 1–29 (MNNNAQNKRSLDDSNGNDTKRPKQEDPKY). Basic and acidic residues predominate over residues 18-28 (DTKRPKQEDPK). An Exonuclease domain is found at 241-389 (VLGIDCEMGF…EDSIAAIDIV (149 aa)).

It belongs to the REXO1/REXO3 family.

It is found in the cytoplasm. The protein localises to the nucleus. Functionally, 3' to 5' exoribonuclease required for proper 3' end maturation of MRP RNA and of the U5L snRNA. The chain is RNA exonuclease 3 (REX3) from Candida albicans (strain SC5314 / ATCC MYA-2876) (Yeast).